Reading from the N-terminus, the 162-residue chain is Caveolin-2 (162 aa).

Topologically, residues 1 to 86 (MGLETEKADA…FEVSKYLIYK (86 aa)) are cytoplasmic. At Y19 the chain carries Phosphotyrosine; by SRC. A disordered region spans residues 19 to 40 (YSRHSGLGYPEPEKCAKSTQDR). 2 positions are modified to phosphoserine: S20 and S23. The residue at position 27 (Y27) is a Phosphotyrosine; by SRC. Residues 29 to 40 (EPEKCAKSTQDR) are compositionally biased toward basic and acidic residues. The residue at position 36 (S36) is a Phosphoserine. Residues 87 to 107 (VLTVLLAIPLAFVAGILFATL) constitute an intramembrane region (helical). Topologically, residues 108 to 162 (SCLHIWIVVPFVKTCLMVLPSVQTVWHSITDGFIAPLYKSMGLIFSSISLRLSPE) are cytoplasmic.

It belongs to the caveolin family. Monomer or homodimer. Interacts with CAV1; the interaction forms a stable heterooligomeric complex that is required for targeting to lipid rafts and for caveolae formation. Tyrosine phosphorylated forms do not form heterooligomers with the Tyr-19-phosphorylated form existing as a monomer or dimer, and the Tyr-27-form as a monomer only. Interacts (tyrosine phosphorylated form) with the SH2 domain-containing proteins, RASA1, NCK1 and SRC. Interacts (tyrosine phosphorylated form) with INSR, the interaction (Tyr-27-phosphorylated form) is increased on insulin stimulation. Interacts (Tyr-19 phosphorylated form) with MAPK1 (phosphorylated form); the interaction, promoted by insulin, leads to nuclear location and MAPK1 activation. Interacts with STAT3; the interaction is increased on insulin-induced tyrosine phosphorylation leading to STAT activation. In terms of processing, phosphorylated on serine and tyrosine residues. CAV1 promotes phosphorylation on Ser-23 which then targets the complex to the plasma membrane, lipid rafts and caveolae. Phosphorylation on Ser-36 appears to modulate mitosis in endothelial cells. Phosphorylation on both Tyr-19 and Tyr-27 is required for insulin-induced 'Ser-727' phosphorylation of STAT3 and its activation. Phosphorylation on Tyr-19 is required for insulin-induced phosphorylation of MAPK1 and DNA binding of STAT3. Tyrosine phosphorylation is induced by both EGF and insulin (By. similarity).

The protein resides in the nucleus. It is found in the cytoplasm. It localises to the golgi apparatus membrane. Its subcellular location is the cell membrane. The protein localises to the membrane. The protein resides in the caveola. May act as a scaffolding protein within caveolar membranes. Interacts directly with G-protein alpha subunits and can functionally regulate their activity. Acts as an accessory protein in conjunction with CAV1 in targeting to lipid rafts and driving caveolae formation. The Ser-36 phosphorylated form has a role in modulating mitosis in endothelial cells. Positive regulator of cellular mitogenesis of the MAPK signaling pathway. Required for the insulin-stimulated nuclear translocation and activation of MAPK1 and STAT3, and the subsequent regulation of cell cycle progression. The sequence is that of Caveolin-2 (CAV2) from Didelphis virginiana (North American opossum).